The primary structure comprises 320 residues: Malate dehydrogenase (320 aa).

NAD(+)-binding positions include 10–15 and D34; that span reads GAGNIG. The substrate site is built by R83 and R89. Residues N96 and 119–121 contribute to the NAD(+) site; that span reads ITN. Substrate contacts are provided by N121 and R152. H176 (proton acceptor) is an active-site residue.

Belongs to the LDH/MDH superfamily. MDH type 3 family.

The catalysed reaction is (S)-malate + NAD(+) = oxaloacetate + NADH + H(+). Its function is as follows. Catalyzes the reversible oxidation of malate to oxaloacetate. In Novosphingobium aromaticivorans (strain ATCC 700278 / DSM 12444 / CCUG 56034 / CIP 105152 / NBRC 16084 / F199), this protein is Malate dehydrogenase.